A 132-amino-acid polypeptide reads, in one-letter code: Interleukin-13 (132 aa).

The first 18 residues, M1–A18, serve as a signal peptide directing secretion. 4 N-linked (GlcNAc...) asparagine glycosylation sites follow: N38, N49, N57, and N72. Intrachain disulfides connect C48/C76 and C64/C90.

It belongs to the IL-4/IL-13 family. As to quaternary structure, interacts with IL13RA2.

Its subcellular location is the secreted. Functionally, cytokine that plays important roles in allergic inflammation and immune response to parasite infection. Synergizes with IL2 in regulating interferon-gamma synthesis. Stimulates B-cell proliferation, and activation of eosinophils, basophils, and mast cells. Plays an important role in controlling IL33 activity by modulating the production of transmembrane and soluble forms of interleukin-1 receptor-like 1/IL1RL1. Displays the capacity to antagonize Th1-driven proinflammatory immune response and downregulates synthesis of many proinflammatory cytokines including IL1, IL6, IL10, IL12 and TNF-alpha through a mechanism that partially involves suppression of NF-kappa-B. Also functions on nonhematopoietic cells, including endothelial cells where it induces vascular cell adhesion protein 1/VCAM1, which is important in the recruitment of eosinophils. Exerts its biological effects through its receptors which comprises the IL4R chain and the IL13RA1 chain, to activate JAK1 and TYK2, leading to the activation of STAT6. Aside from IL13RA1, another receptor IL13RA2 acts as a high affinity decoy for IL13 and mediates internalization and depletion of extracellular IL13. This Macaca mulatta (Rhesus macaque) protein is Interleukin-13 (IL13).